A 449-amino-acid chain; its full sequence is Phosphoglucosamine mutase (449 aa).

The active-site Phosphoserine intermediate is serine 102. Serine 102, aspartate 241, aspartate 243, and aspartate 245 together coordinate Mg(2+). Serine 102 is modified (phosphoserine).

The protein belongs to the phosphohexose mutase family. Requires Mg(2+) as cofactor. Activated by phosphorylation.

It catalyses the reaction alpha-D-glucosamine 1-phosphate = D-glucosamine 6-phosphate. Functionally, catalyzes the conversion of glucosamine-6-phosphate to glucosamine-1-phosphate. This chain is Phosphoglucosamine mutase, found in Roseobacter denitrificans (strain ATCC 33942 / OCh 114) (Erythrobacter sp. (strain OCh 114)).